A 370-amino-acid chain; its full sequence is Psilocybin cluster transcription regulator (370 aa).

Disordered stretches follow at residues 1–39 (MAPT…ADIS) and 102–221 (YQTG…RRRR). Residues 143–152 (IQHQDQQQSG) are compositionally biased toward polar residues. A compositionally biased stretch (low complexity) spans 183-202 (TSTSTPSGGRRGGRSATMGS). The segment covering 204 to 218 (EWSRQRKDNHKEVER) has biased composition (basic and acidic residues). Residues 208–221 (QRKDNHKEVERRRR) are basic motif. The 51-residue stretch at 208–258 (QRKDNHKEVERRRRGNINEGINELGRIVPSGSGEKAKGAILSRAVQYIHHL) folds into the bHLH domain. The tract at residues 222-258 (GNINEGINELGRIVPSGSGEKAKGAILSRAVQYIHHL) is helix-loop-helix motif. Residues 317–370 (VSTAGAGSGAAKDESAAGTKRRSTDGADAAGTNVEGGNNDNAEGERDGKRQRTE) are disordered. Residues 359 to 370 (EGERDGKRQRTE) show a composition bias toward basic and acidic residues.

It is found in the nucleus. Transcription factor that may regulate the expression of the gene cluster that mediates the biosynthesis of psilocybin, a psychotropic tryptamine-derived natural product. The sequence is that of Psilocybin cluster transcription regulator from Psilocybe cyanescens.